Reading from the N-terminus, the 177-residue chain is ATP-dependent protease subunit HslV (177 aa).

The active site involves Thr6. Na(+) is bound by residues Ala162, Cys165, and Thr168.

This sequence belongs to the peptidase T1B family. HslV subfamily. A double ring-shaped homohexamer of HslV is capped on each side by a ring-shaped HslU homohexamer. The assembly of the HslU/HslV complex is dependent on binding of ATP.

It localises to the cytoplasm. It carries out the reaction ATP-dependent cleavage of peptide bonds with broad specificity.. Allosterically activated by HslU binding. Its function is as follows. Protease subunit of a proteasome-like degradation complex believed to be a general protein degrading machinery. This Desulfovibrio desulfuricans (strain ATCC 27774 / DSM 6949 / MB) protein is ATP-dependent protease subunit HslV.